We begin with the raw amino-acid sequence, 214 residues long: Uridine kinase (214 aa).

ATP is bound at residue 11 to 18 (GGSGSGKT).

Belongs to the uridine kinase family.

It is found in the cytoplasm. The catalysed reaction is uridine + ATP = UMP + ADP + H(+). It catalyses the reaction cytidine + ATP = CMP + ADP + H(+). It functions in the pathway pyrimidine metabolism; CTP biosynthesis via salvage pathway; CTP from cytidine: step 1/3. It participates in pyrimidine metabolism; UMP biosynthesis via salvage pathway; UMP from uridine: step 1/1. This chain is Uridine kinase, found in Brevibacillus brevis (strain 47 / JCM 6285 / NBRC 100599).